The chain runs to 225 residues: Endonuclease V (225 aa).

The Mg(2+) site is built by Asp43 and Asp110.

The protein belongs to the endonuclease V family. Mg(2+) is required as a cofactor.

Its subcellular location is the cytoplasm. The catalysed reaction is Endonucleolytic cleavage at apurinic or apyrimidinic sites to products with a 5'-phosphate.. Its function is as follows. DNA repair enzyme involved in the repair of deaminated bases. Selectively cleaves double-stranded DNA at the second phosphodiester bond 3' to a deoxyinosine leaving behind the intact lesion on the nicked DNA. This Thermotoga sp. (strain RQ2) protein is Endonuclease V.